The primary structure comprises 317 residues: Beta-ketoacyl-[acyl-carrier-protein] synthase III (317 aa).

Catalysis depends on residues C112 and H244. The tract at residues 245–249 (QANIR) is ACP-binding. N274 is a catalytic residue.

It belongs to the thiolase-like superfamily. FabH family. Homodimer.

Its subcellular location is the cytoplasm. The enzyme catalyses malonyl-[ACP] + acetyl-CoA + H(+) = 3-oxobutanoyl-[ACP] + CO2 + CoA. It participates in lipid metabolism; fatty acid biosynthesis. Catalyzes the condensation reaction of fatty acid synthesis by the addition to an acyl acceptor of two carbons from malonyl-ACP. Catalyzes the first condensation reaction which initiates fatty acid synthesis and may therefore play a role in governing the total rate of fatty acid production. Possesses both acetoacetyl-ACP synthase and acetyl transacylase activities. Its substrate specificity determines the biosynthesis of branched-chain and/or straight-chain of fatty acids. This Rickettsia felis (strain ATCC VR-1525 / URRWXCal2) (Rickettsia azadi) protein is Beta-ketoacyl-[acyl-carrier-protein] synthase III.